The chain runs to 258 residues: Ribosomal RNA small subunit methyltransferase J (258 aa).

S-adenosyl-L-methionine is bound by residues 104 to 105 (RD), 120 to 121 (ER), and Asp-175.

It belongs to the methyltransferase superfamily. RsmJ family.

Its subcellular location is the cytoplasm. The catalysed reaction is guanosine(1516) in 16S rRNA + S-adenosyl-L-methionine = N(2)-methylguanosine(1516) in 16S rRNA + S-adenosyl-L-homocysteine + H(+). Functionally, specifically methylates the guanosine in position 1516 of 16S rRNA. The polypeptide is Ribosomal RNA small subunit methyltransferase J (Chromobacterium violaceum (strain ATCC 12472 / DSM 30191 / JCM 1249 / CCUG 213 / NBRC 12614 / NCIMB 9131 / NCTC 9757 / MK)).